Consider the following 238-residue polypeptide: UPF0758 protein Dtpsy_2777 (238 aa).

An MPN domain is found at 116–238; it reads VFDSPQAVQH…ALSMAEQGLV (123 aa). Residues H187, H189, and D200 each coordinate Zn(2+). The JAMM motif motif lies at 187 to 200; that stretch reads HNHPSGSVQPSRAD.

This sequence belongs to the UPF0758 family.

This Acidovorax ebreus (strain TPSY) (Diaphorobacter sp. (strain TPSY)) protein is UPF0758 protein Dtpsy_2777.